A 174-amino-acid chain; its full sequence is Recombination protein RecR (174 aa).

Residues 30–45 (CNACRTFTEEEECTIC) form a C4-type zinc finger. A Toprim domain is found at 54–149 (GQLCIVEMPE…KVTRIAHGIP (96 aa)).

This sequence belongs to the RecR family.

May play a role in DNA repair. It seems to be involved in an RecBC-independent recombinational process of DNA repair. It may act with RecF and RecO. This is Recombination protein RecR from Haemophilus ducreyi (strain 35000HP / ATCC 700724).